A 347-amino-acid chain; its full sequence is Lipoyl synthase (347 aa).

[4Fe-4S] cluster is bound by residues Cys55, Cys60, Cys66, Cys81, Cys85, Cys88, and Ser292. In terms of domain architecture, Radical SAM core spans 67–281 (WEDREASFLI…SEAAYDMGFP (215 aa)).

This sequence belongs to the radical SAM superfamily. Lipoyl synthase family. [4Fe-4S] cluster serves as cofactor.

The protein resides in the cytoplasm. The enzyme catalyses [[Fe-S] cluster scaffold protein carrying a second [4Fe-4S](2+) cluster] + N(6)-octanoyl-L-lysyl-[protein] + 2 oxidized [2Fe-2S]-[ferredoxin] + 2 S-adenosyl-L-methionine + 4 H(+) = [[Fe-S] cluster scaffold protein] + N(6)-[(R)-dihydrolipoyl]-L-lysyl-[protein] + 4 Fe(3+) + 2 hydrogen sulfide + 2 5'-deoxyadenosine + 2 L-methionine + 2 reduced [2Fe-2S]-[ferredoxin]. Its pathway is protein modification; protein lipoylation via endogenous pathway; protein N(6)-(lipoyl)lysine from octanoyl-[acyl-carrier-protein]: step 2/2. Catalyzes the radical-mediated insertion of two sulfur atoms into the C-6 and C-8 positions of the octanoyl moiety bound to the lipoyl domains of lipoate-dependent enzymes, thereby converting the octanoylated domains into lipoylated derivatives. This chain is Lipoyl synthase, found in Corynebacterium urealyticum (strain ATCC 43042 / DSM 7109).